A 131-amino-acid polypeptide reads, in one-letter code: Phosphoribosyl-AMP cyclohydrolase (131 aa).

Residue Asp-78 participates in Mg(2+) binding. Cys-79 is a Zn(2+) binding site. Residues Asp-80 and Asp-82 each coordinate Mg(2+). Zn(2+) is bound by residues Cys-96 and Cys-103.

Belongs to the PRA-CH family. As to quaternary structure, homodimer. It depends on Mg(2+) as a cofactor. Requires Zn(2+) as cofactor.

It is found in the cytoplasm. It carries out the reaction 1-(5-phospho-beta-D-ribosyl)-5'-AMP + H2O = 1-(5-phospho-beta-D-ribosyl)-5-[(5-phospho-beta-D-ribosylamino)methylideneamino]imidazole-4-carboxamide. It participates in amino-acid biosynthesis; L-histidine biosynthesis; L-histidine from 5-phospho-alpha-D-ribose 1-diphosphate: step 3/9. In terms of biological role, catalyzes the hydrolysis of the adenine ring of phosphoribosyl-AMP. The chain is Phosphoribosyl-AMP cyclohydrolase from Neisseria meningitidis serogroup C / serotype 2a (strain ATCC 700532 / DSM 15464 / FAM18).